The chain runs to 991 residues: Pentatricopeptide repeat-containing protein At1g73710 (991 aa).

Disordered regions lie at residues 1–27 (MLQP…HHHH) and 61–81 (SSSS…RKRK). The span at 15-27 (VRHHHHHHHHHHH) shows a compositional bias: basic residues. The span at 61–73 (SSSSVSPPRCSKP) shows a compositional bias: low complexity. PPR repeat units lie at residues 144-178 (NVIH…GVLP), 179-213 (TNNT…MHFP), 214-248 (DEVT…KVDL), 304-338 (LTST…GVPI), 339-373 (DTVT…GISP), 374-408 (DTKT…GLFP), 409-443 (DTVT…SIRI), 444-474 (DEHS…FQLD), 478-513 (SSTT…GQRN), 514-548 (DVLE…GTWP), 549-583 (DECT…GCKP), 584-618 (GCKT…GVKP), 619-653 (NEVV…GVQS), 654-688 (NHIV…EGGP), 689-719 (DVAA…LREK), 723-757 (DVIS…GLLS), 758-792 (DCTS…RKLL), 862-896 (EHFA…GLEP), and 897-931 (DIVT…ELEP). Basic and acidic residues predominate over residues 965-974 (AERECSSRSG). A disordered region spans residues 965-991 (AERECSSRSGEEEEDDEEENSEEDEAF). Acidic residues predominate over residues 975–991 (EEEEDDEEENSEEDEAF).

Belongs to the PPR family. P subfamily.

This is Pentatricopeptide repeat-containing protein At1g73710 from Arabidopsis thaliana (Mouse-ear cress).